A 128-amino-acid chain; its full sequence is Small ribosomal subunit protein uS14m (128 aa).

This sequence belongs to the universal ribosomal protein uS14 family. Component of the mitochondrial ribosome small subunit (28S) which comprises a 12S rRNA and about 30 distinct proteins. Interacts with LIAT1.

The protein resides in the mitochondrion. The chain is Small ribosomal subunit protein uS14m (Mrps14) from Mus musculus (Mouse).